Reading from the N-terminus, the 538-residue chain is Potassium channel subfamily K member 10 (538 aa).

At 1 to 71 (MFFLYTDFFL…GLQTVMKWKT (71 aa)) the chain is on the cytoplasmic side. Residues 72 to 92 (VVAIFVVVVVYLVTGGLVFRA) form a helical membrane-spanning segment. Asn144, Asn147, and Asn148 each carry an N-linked (GlcNAc...) asparagine glycan. An intramembrane region (pore-forming) is located at residues 154-180 (LGSAFFFAGTVITTIGYGNIAPSTEGG). Residues Thr167, Ile168, Gly169, and Tyr170 each contribute to the K(+) site. Residues 167-172 (TIGYGN) form a selectivity filter 1 region. The chain crosses the membrane as a helical span at residues 182–202 (IFCILYAIFGIPLFGFLLAGI). The Cytoplasmic segment spans residues 203 to 233 (GDQLGTIFGKSIARVEKVFRKKQVSQTKIRV). A helical transmembrane segment spans residues 234–254 (ISTILFILAGCIVFVTIPAVI). The pore-forming intramembrane region spans 263-294 (ALESIYFVVVTLTTVGFGDFVAGGNAGINYRE). Positions 276, 277, 278, and 279 each coordinate K(+). Positions 276–281 (TVGFGD) are selectivity filter 2. A helical membrane pass occupies residues 299 to 319 (LVWFWILVGLAYFAAVLSMIG). At 320–538 (DWLRVLSKKT…ENNSLLEDRN (219 aa)) the chain is on the cytoplasmic side. A compositionally biased stretch (polar residues) spans 412 to 421 (SQESINNRPN). 2 disordered regions span residues 412–443 (SQESINNRPNNLRLKGPEQLNKHGQGASEDNI) and 510–538 (QHAELENGMIPTDTKDREPENNSLLEDRN). Positions 522–538 (DTKDREPENNSLLEDRN) are enriched in basic and acidic residues.

Belongs to the two pore domain potassium channel (TC 1.A.1.8) family. In terms of assembly, homodimer; disulfide-linked. Forms heterodimers with other 2-pore domain K(+) channel subunits, such as KCNK2, KCNK4 and KCNK18. Abundantly expressed in pancreas and kidney and to a lower level in brain, testis, colon, and small intestine. In brain, mainly expressed in cerebellum, occipital lobe, putamen, and thalamus. No expression is detected in amygdala and spinal cord. In terms of tissue distribution, strongly expressed in kidney (primarily in the proximal tubule) and pancreas. As to expression, abundantly expressed in brain.

Its subcellular location is the cell membrane. It carries out the reaction K(+)(in) = K(+)(out). The catalysed reaction is Rb(+)(in) = Rb(+)(out). The enzyme catalyses Cs(+)(in) = Cs(+)(out). With respect to regulation, activated by various stimuli including acidic pH, anesthetics chloroform, halothane and isoflurane, mechanical stretch, lipids such as arachidonic, docosahexaenoic and linoleic polyunsaturated fatty acids and lysophosphatidylcholine and lysophosphatidylinositol lysophospholipids. Inhibited by norfluoxetine, the active metabolite of antidepressant fluoxetine (Prozac). In terms of biological role, k(+) channel that conducts voltage-dependent outward rectifying currents upon membrane depolarization. Voltage sensing is coupled to K(+) electrochemical gradient in an 'ion flux gating' mode where outward but not inward ion flow opens the gate. Converts to voltage-independent 'leak' conductance mode upon stimulation by various stimuli including mechanical membrane stretch, acidic pH, heat and lipids. Homo- and heterodimerizes to form functional channels with distinct regulatory and gating properties. In trigeminal ganglia sensory neurons, the heterodimer of KCNK10/TREK-2 and KCNK18/TRESK inhibits neuronal firing and neurogenic inflammation by stabilizing the resting membrane potential at K(+) equilibrium potential as well as by regulating the threshold of action potentials and the spike frequency. Permeable to other monovalent ions such as Rb(+) and Cs(+). This is Potassium channel subfamily K member 10 from Homo sapiens (Human).